The following is a 159-amino-acid chain: Ribosomal RNA large subunit methyltransferase H (159 aa).

S-adenosyl-L-methionine is bound by residues Leu-76, Gly-108, and 127–132 (FSKMTL).

This sequence belongs to the RNA methyltransferase RlmH family. In terms of assembly, homodimer.

Its subcellular location is the cytoplasm. It catalyses the reaction pseudouridine(1915) in 23S rRNA + S-adenosyl-L-methionine = N(3)-methylpseudouridine(1915) in 23S rRNA + S-adenosyl-L-homocysteine + H(+). Specifically methylates the pseudouridine at position 1915 (m3Psi1915) in 23S rRNA. The sequence is that of Ribosomal RNA large subunit methyltransferase H from Bacillus cytotoxicus (strain DSM 22905 / CIP 110041 / 391-98 / NVH 391-98).